The chain runs to 365 residues: Alanine racemase (365 aa).

Lys-32 serves as the catalytic Proton acceptor; specific for D-alanine. Lys-32 bears the N6-(pyridoxal phosphate)lysine mark. A substrate-binding site is contributed by Arg-128. Tyr-257 acts as the Proton acceptor; specific for L-alanine in catalysis. Position 305 (Met-305) interacts with substrate.

This sequence belongs to the alanine racemase family. Pyridoxal 5'-phosphate is required as a cofactor.

It catalyses the reaction L-alanine = D-alanine. The protein operates within amino-acid biosynthesis; D-alanine biosynthesis; D-alanine from L-alanine: step 1/1. Catalyzes the interconversion of L-alanine and D-alanine. May also act on other amino acids. This is Alanine racemase (alr) from Francisella tularensis subsp. tularensis (strain WY96-3418).